Reading from the N-terminus, the 126-residue chain is Fluoride-specific ion channel FluC (126 aa).

4 helical membrane-spanning segments follow: residues 4–24 (SLLS…FVGL), 35–55 (LGTI…IALF), 67–87 (FVIT…AEVI), and 97–117 (FAIA…VLGL). Na(+) is bound by residues glycine 74 and threonine 77.

It belongs to the fluoride channel Fluc/FEX (TC 1.A.43) family.

The protein localises to the cell inner membrane. It carries out the reaction fluoride(in) = fluoride(out). Its activity is regulated as follows. Na(+) is not transported, but it plays an essential structural role and its presence is essential for fluoride channel function. Functionally, fluoride-specific ion channel. Important for reducing fluoride concentration in the cell, thus reducing its toxicity. In Acinetobacter baylyi (strain ATCC 33305 / BD413 / ADP1), this protein is Fluoride-specific ion channel FluC.